We begin with the raw amino-acid sequence, 424 residues long: Glutathione reductase (424 aa).

Lys8 contacts FAD. Tyr56 lines the glutathione pocket. Ala72 lines the FAD pocket. The NADP(+) site is built by Ala137, Ile140, Glu143, Arg160, Arg166, and Gly236. Asp277 contacts FAD. NADP(+) is bound at residue Leu283. An FAD-binding site is contributed by Thr285. Arg293 lines the glutathione pocket. Residue Val316 participates in NADP(+) binding. FAD is bound at residue His413. His413 (proton acceptor) is an active-site residue.

It belongs to the class-I pyridine nucleotide-disulfide oxidoreductase family. In terms of assembly, homodimer; disulfide-linked. Requires FAD as cofactor.

The protein resides in the mitochondrion. It is found in the cytoplasm. It carries out the reaction 2 glutathione + NADP(+) = glutathione disulfide + NADPH + H(+). Its function is as follows. Catalyzes the reduction of glutathione disulfide (GSSG) to reduced glutathione (GSH). Constitutes the major mechanism to maintain a high GSH:GSSG ratio in the cytosol. The sequence is that of Glutathione reductase (Gsr) from Rattus norvegicus (Rat).